Here is a 281-residue protein sequence, read N- to C-terminus: GDT1-like protein 4 (281 aa).

The signal sequence occupies residues 1–22 (MARRVSTTRLLLLLLLVAAAAA). 6 helical membrane-spanning segments follow: residues 66–86 (AGLG…VSEI), 105–125 (TVLS…TGLG), 137–157 (TNSA…YIAW), 188–208 (IFSR…FLAE), 226–246 (AVGV…FAVV), and 258–278 (GTVA…SYFY).

Belongs to the GDT1 family.

The protein resides in the membrane. The chain is GDT1-like protein 4 from Oryza sativa subsp. indica (Rice).